The sequence spans 142 residues: MPMGINAARKMEDDWKKLRWSDPHYCRRALGLKVKADPLGGAPRARGIVLEKVGVEAKQPNSAIRKCVRIQLIKNGRQVTAFCPGDGAIGFIDEHDEVVVERIGGRMGRSMGDIPGVRFKVVAVNNVSLEEMVSGRKEKPVR.

The protein belongs to the universal ribosomal protein uS12 family. In terms of assembly, part of the 30S ribosomal subunit.

In terms of biological role, with S4 and S5 plays an important role in translational accuracy. Located at the interface of the 30S and 50S subunits. The protein is Small ribosomal subunit protein uS12 of Methanothrix thermoacetophila (strain DSM 6194 / JCM 14653 / NBRC 101360 / PT) (Methanosaeta thermophila).